A 210-amino-acid chain; its full sequence is Large ribosomal subunit protein uL3 (210 aa).

Residues 125–151 form a disordered region; it reads RHGQSRGPMSHGSRYHRRPGSMGPVAP.

It belongs to the universal ribosomal protein uL3 family. As to quaternary structure, part of the 50S ribosomal subunit. Forms a cluster with proteins L14 and L19.

Its function is as follows. One of the primary rRNA binding proteins, it binds directly near the 3'-end of the 23S rRNA, where it nucleates assembly of the 50S subunit. In Bacillus mycoides (strain KBAB4) (Bacillus weihenstephanensis), this protein is Large ribosomal subunit protein uL3.